Here is a 468-residue protein sequence, read N- to C-terminus: Homocitrate synthase (468 aa).

Residues 11 to 266 enclose the Pyruvate carboxyltransferase domain; it reads VGILDSTLRE…IEVVDLKKLS (256 aa). Arg19 contacts 2-oxoglutarate. Glu20 contributes to the Mg(2+) binding site. 2-oxoglutarate contacts are provided by His83, Arg143, and Thr177. 2 residues coordinate Mg(2+): His205 and His207. Catalysis depends on His299, which acts as the Proton acceptor.

The protein belongs to the alpha-IPM synthase/homocitrate synthase family. Homocitrate synthase LYS20/LYS21 subfamily. It depends on Mg(2+) as a cofactor. Mn(2+) is required as a cofactor.

It carries out the reaction acetyl-CoA + 2-oxoglutarate + H2O = (2R)-homocitrate + CoA + H(+). The protein operates within amino-acid biosynthesis; L-lysine biosynthesis via AAA pathway; L-alpha-aminoadipate from 2-oxoglutarate: step 1/5. With respect to regulation, inhibited by lysine. Its function is as follows. Catalyzes the aldol-type condensation of 2-oxoglutarate with acetyl-CoA to yield homocitrate. Carries out the first step of the alpha-aminoadipate (AAA) lysine biosynthesis pathway. Does not display 2-isopropylmalate synthase and citramalate synthase activities since it cannot use 2-oxoisovalerate or pyruvate as substrate. The chain is Homocitrate synthase from Sulfolobus acidocaldarius (strain ATCC 33909 / DSM 639 / JCM 8929 / NBRC 15157 / NCIMB 11770).